An 872-amino-acid polypeptide reads, in one-letter code: Cyanophycin synthetase (872 aa).

The ATP-grasp domain occupies 224–480 (KTILQDAGVP…VAAPVMDMLF (257 aa)). 495–501 (GTNGKTT) is a binding site for ATP.

This sequence in the C-terminal section; belongs to the MurCDEF family. Homodimer.

It catalyses the reaction [L-4-(L-arginin-2-N-yl)aspartate](n) + L-aspartate + ATP = [L-4-(L-arginin-2-N-yl)aspartate](n)-L-aspartate + ADP + phosphate + H(+). It carries out the reaction [L-4-(L-arginin-2-N-yl)aspartate](n)-L-aspartate + L-arginine + ATP = [L-4-(L-arginin-2-N-yl)aspartate](n+1) + ADP + phosphate + H(+). Its function is as follows. Catalyzes the ATP-dependent polymerization of arginine and aspartate to multi-L-arginyl-poly-L-aspartic acid (cyanophycin; a water-insoluble reserve polymer). The protein is Cyanophycin synthetase (cphA) of Crocosphaera subtropica (strain ATCC 51142 / BH68) (Cyanothece sp. (strain ATCC 51142)).